Here is a 510-residue protein sequence, read N- to C-terminus: MIWHVQNENFILDSTRIFMKAFHLLLFDGSFIFPECILIFGLILLLMIDSTSDQKDIPWLYFISSTSLVMSITALLFRWREEPMISFSGNFQTNNFNEIFQFLILLCSTLCIPLSVEYIECTEMAIAEFLLFVLTATLGGMFLCGANDLITIFVAPECFSLCSYLLSGYTKKDVRSNEATTKYLLMGGASSSILVHGFSWLYGSSGGEIELQEIVNGLINTQMYNSPGISIALIFITVGIGFKLSPAPSHQWTPDVYEGSPTPVVAFLSVTSKVAASASATRIFDIPFYFSSNEWHLLLEILAILSMILGNLIAITQTSMKRMLAYSSIGQIGYVIIGIIVGNSNGGYASMITYMLFYISMNLGTFACIVLFGLRTGTDNIRDYAGLYTKDPFLALSLAPCLLSLGGLPPLAGFFGKLHLFWCGWQAGLYFLVSIGLLTSVVSIYYYLKIIKLLMTGRNQEITPHVRNYRRSPLRSNNSIELSMIVCVIASTIPGISMNPIIAIAQDTLF.

13 helical membrane passes run 24–44, 57–77, 99–119, 124–144, 149–169, 183–203, 227–247, 295–315, 323–343, 354–374, 395–415, 418–438, and 484–504; these read LLLFDGSFIFPECILIFGLIL, IPWLYFISSTSLVMSITALLF, IFQFLILLCSTLCIPLSVEYI, MAIAEFLLFVLTATLGGMFLC, LITIFVAPECFSLCSYLLSGY, YLLMGGASSSILVHGFSWLYG, PGISIALIFITVGIGFKLSPA, WHLLLEILAILSMILGNLIAI, MLAYSSIGQIGYVIIGIIVGN, YMLFYISMNLGTFACIVLFGL, ALSLAPCLLSLGGLPPLAGFF, LHLFWCGWQAGLYFLVSIGLL, and MIVCVIASTIPGISMNPIIAI.

Belongs to the complex I subunit 2 family. NDH is composed of at least 16 different subunits, 5 of which are encoded in the nucleus.

The protein resides in the plastid. It is found in the chloroplast thylakoid membrane. The catalysed reaction is a plastoquinone + NADH + (n+1) H(+)(in) = a plastoquinol + NAD(+) + n H(+)(out). It carries out the reaction a plastoquinone + NADPH + (n+1) H(+)(in) = a plastoquinol + NADP(+) + n H(+)(out). Functionally, NDH shuttles electrons from NAD(P)H:plastoquinone, via FMN and iron-sulfur (Fe-S) centers, to quinones in the photosynthetic chain and possibly in a chloroplast respiratory chain. The immediate electron acceptor for the enzyme in this species is believed to be plastoquinone. Couples the redox reaction to proton translocation, and thus conserves the redox energy in a proton gradient. The polypeptide is NAD(P)H-quinone oxidoreductase subunit 2 B, chloroplastic (Gossypium barbadense (Sea Island cotton)).